A 312-amino-acid polypeptide reads, in one-letter code: Dehydrogenase/reductase SDR family member 7C (312 aa).

Residues 1–18 form the signal peptide; it reads MGVMAMLMLPLLLLGISG. S47, L49, Y192, K196, and S227 together coordinate NAD(+). Y192 acts as the Proton acceptor in catalysis.

Belongs to the short-chain dehydrogenases/reductases (SDR) family.

It is found in the sarcoplasmic reticulum membrane. The enzyme catalyses all-trans-retinol + NAD(+) = all-trans-retinal + NADH + H(+). NADH-dependent oxidoreductase which catalyzes the oxidation of all-trans-retinol to all-trans-retinal. Plays a role in the regulation of cardiac and skeletal muscle metabolic functions. Maintains Ca(2+) intracellular homeostasis by repressing Ca(2+) release from the sarcoplasmic reticulum (SR) in myotubes, possibly through local alternations in NAD/NADH or retinol/retinal. Also plays a role in Ca(2+) homeostasis by controlling Ca(2+) overload in the cytosol and the SR in myotubes. Involved in glucose uptake into skeletal muscles and muscle performance by activating PI3K and mTORC2-mediated AKT1 phosphorylation signaling pathways, possibly through the action of its downstream catalytic product all-trans-retinoic acid. The polypeptide is Dehydrogenase/reductase SDR family member 7C (Homo sapiens (Human)).